A 299-amino-acid chain; its full sequence is Ethylmalonyl-CoA decarboxylase (299 aa).

Lysine 209 is modified (N6-acetyllysine; alternate). Lysine 209 is modified (N6-succinyllysine; alternate). N6-succinyllysine is present on lysine 293.

It belongs to the enoyl-CoA hydratase/isomerase family.

It localises to the cytoplasm. Its subcellular location is the cytosol. The catalysed reaction is (2S)-ethylmalonyl-CoA + H(+) = butanoyl-CoA + CO2. The enzyme catalyses (S)-methylmalonyl-CoA + H(+) = propanoyl-CoA + CO2. It catalyses the reaction (2R)-ethylmalonyl-CoA + H(+) = butanoyl-CoA + CO2. Functionally, decarboxylates ethylmalonyl-CoA, a potentially toxic metabolite, to form butyryl-CoA, suggesting it might be involved in metabolite proofreading. Acts preferentially on (S)-ethylmalonyl-CoA but also has some activity on the (R)-isomer. Also has methylmalonyl-CoA decarboxylase activity at lower level. This chain is Ethylmalonyl-CoA decarboxylase (Echdc1), found in Rattus norvegicus (Rat).